The following is a 166-amino-acid chain: NADH-quinone oxidoreductase subunit A (166 aa).

3 helical membrane-spanning segments follow: residues 16–36 (FAVFLIGAVGLCGLMLLGAYF), 68–88 (FYLVAMFFVIFDVEALYLYAW), and 98–118 (IGFIEAVIFILVLLAGLFYLV). A disordered region spans residues 141–166 (RYASSHPQDISQELSVAGSQQANESR).

Belongs to the complex I subunit 3 family. As to quaternary structure, NDH-1 is composed of 13 different subunits. Subunits NuoA, H, J, K, L, M, N constitute the membrane sector of the complex.

The protein resides in the cell inner membrane. It catalyses the reaction a quinone + NADH + 5 H(+)(in) = a quinol + NAD(+) + 4 H(+)(out). Its function is as follows. NDH-1 shuttles electrons from NADH, via FMN and iron-sulfur (Fe-S) centers, to quinones in the respiratory chain. The immediate electron acceptor for the enzyme in this species is believed to be ubiquinone. Couples the redox reaction to proton translocation (for every two electrons transferred, four hydrogen ions are translocated across the cytoplasmic membrane), and thus conserves the redox energy in a proton gradient. This chain is NADH-quinone oxidoreductase subunit A, found in Yersinia pseudotuberculosis serotype IB (strain PB1/+).